A 146-amino-acid polypeptide reads, in one-letter code: Large ribosomal subunit protein uL15 (146 aa).

The tract at residues 1-39 (MTLKLHNLRPAPGAKTAKTRVGRGEGSKGKTAGRGTKGT) is disordered.

The protein belongs to the universal ribosomal protein uL15 family. In terms of assembly, part of the 50S ribosomal subunit.

Its function is as follows. Binds to the 23S rRNA. The polypeptide is Large ribosomal subunit protein uL15 (Nocardioides sp. (strain ATCC BAA-499 / JS614)).